A 180-amino-acid polypeptide reads, in one-letter code: NAD(P)H-quinone oxidoreductase subunit I, chloroplastic (180 aa).

4Fe-4S ferredoxin-type domains lie at 55 to 84 and 95 to 124; these read GRIH…VDWR and LNYS…MTEE. Residues C64, C67, C70, C74, C104, C107, C110, and C114 each coordinate [4Fe-4S] cluster.

The protein belongs to the complex I 23 kDa subunit family. As to quaternary structure, NDH is composed of at least 16 different subunits, 5 of which are encoded in the nucleus. [4Fe-4S] cluster serves as cofactor.

Its subcellular location is the plastid. It localises to the chloroplast thylakoid membrane. It catalyses the reaction a plastoquinone + NADH + (n+1) H(+)(in) = a plastoquinol + NAD(+) + n H(+)(out). The enzyme catalyses a plastoquinone + NADPH + (n+1) H(+)(in) = a plastoquinol + NADP(+) + n H(+)(out). Functionally, NDH shuttles electrons from NAD(P)H:plastoquinone, via FMN and iron-sulfur (Fe-S) centers, to quinones in the photosynthetic chain and possibly in a chloroplast respiratory chain. The immediate electron acceptor for the enzyme in this species is believed to be plastoquinone. Couples the redox reaction to proton translocation, and thus conserves the redox energy in a proton gradient. This Zea mays (Maize) protein is NAD(P)H-quinone oxidoreductase subunit I, chloroplastic.